We begin with the raw amino-acid sequence, 466 residues long: Triplex capsid protein 1 (466 aa).

Residues Met1–Gly29 form a disordered region.

Belongs to the herpesviridae TRX1 protein family. Interacts with TRX2, MCP and capsid vertex component 2/CVC2.

The protein localises to the virion. Its subcellular location is the host nucleus. Its function is as follows. Structural component of the T=16 icosahedral capsid. The capsid is composed of pentamers and hexamers of major capsid protein/MCP, which are linked together by heterotrimers called triplexes. These triplexes are formed by a single molecule of triplex protein 1/TRX1 and two copies of triplex protein 2/TRX2. Additionally, TRX1 is required for efficient transport of TRX2 to the nucleus, which is the site of capsid assembly. This Homo sapiens (Human) protein is Triplex capsid protein 1.